The chain runs to 177 residues: Ecotin (177 aa).

Positions 1 to 23 (MQASIQNRIFFGLVVLWSTTVLE) are cleaved as a signal peptide. Residues Cys-83 and Cys-122 are joined by a disulfide bond.

Belongs to the protease inhibitor I11 (ecotin) family. Homodimer.

Its subcellular location is the periplasm. General inhibitor of family S1 serine proteases. This chain is Ecotin, found in Prochlorococcus marinus (strain MIT 9313).